The sequence spans 216 residues: Probable glutamine ABC transporter permease protein GlnM (216 aa).

The 189-residue stretch at 17–205 (FYHTLLASVI…VLTIPLSIGV (189 aa)) folds into the ABC transmembrane type-1 domain. A run of 5 helical transmembrane segments spans residues 21 to 41 (LLASVIALAGSFVLGVAVAVM), 63 to 83 (IPLLLITFVFYFGLPNAGLRL), 85 to 105 (GFQAGTVALTIYTSAFIAEAI), 132 to 152 (LHIILPQAIKIVIPPLGNQFL), and 181 to 201 (LVVFDVYIFVALFYLVLTIPL).

Belongs to the binding-protein-dependent transport system permease family. The complex is composed of two ATP-binding proteins (GlnQ), two transmembrane proteins (GlnM and GlnP) and a solute-binding protein (GlnH).

The protein resides in the cell membrane. Part of the ABC transporter complex GlnHMPQ involved in glutamine transport. Probably responsible for the translocation of the substrate across the membrane. This Bacillus subtilis (strain 168) protein is Probable glutamine ABC transporter permease protein GlnM (glnM).